Here is a 339-residue protein sequence, read N- to C-terminus: Ketol-acid reductoisomerase (NADP(+)) (339 aa).

One can recognise a KARI N-terminal Rossmann domain in the interval 1-182; that stretch reads MRVYYDRDAD…GGGRAGIIET (182 aa). Residues 24–27, arginine 48, serine 51, serine 53, and 83–86 contribute to the NADP(+) site; these read YGSQ and DELQ. Residue histidine 108 is part of the active site. Position 134 (glycine 134) interacts with NADP(+). The region spanning 183–328 is the KARI C-terminal knotted domain; sequence TFKEECETDL…ERLRAMMPWI (146 aa). Residues aspartate 191, glutamate 195, glutamate 227, and glutamate 231 each coordinate Mg(2+). Serine 252 contributes to the substrate binding site.

The protein belongs to the ketol-acid reductoisomerase family. Mg(2+) is required as a cofactor.

The catalysed reaction is (2R)-2,3-dihydroxy-3-methylbutanoate + NADP(+) = (2S)-2-acetolactate + NADPH + H(+). It carries out the reaction (2R,3R)-2,3-dihydroxy-3-methylpentanoate + NADP(+) = (S)-2-ethyl-2-hydroxy-3-oxobutanoate + NADPH + H(+). The protein operates within amino-acid biosynthesis; L-isoleucine biosynthesis; L-isoleucine from 2-oxobutanoate: step 2/4. It participates in amino-acid biosynthesis; L-valine biosynthesis; L-valine from pyruvate: step 2/4. Involved in the biosynthesis of branched-chain amino acids (BCAA). Catalyzes an alkyl-migration followed by a ketol-acid reduction of (S)-2-acetolactate (S2AL) to yield (R)-2,3-dihydroxy-isovalerate. In the isomerase reaction, S2AL is rearranged via a Mg-dependent methyl migration to produce 3-hydroxy-3-methyl-2-ketobutyrate (HMKB). In the reductase reaction, this 2-ketoacid undergoes a metal-dependent reduction by NADPH to yield (R)-2,3-dihydroxy-isovalerate. This is Ketol-acid reductoisomerase (NADP(+)) from Methylobacterium nodulans (strain LMG 21967 / CNCM I-2342 / ORS 2060).